The primary structure comprises 523 residues: Ribonuclease Y (523 aa).

The chain crosses the membrane as a helical span at residues 7–24 (LSSLASALLAGGGTYLVY). One can recognise a KH domain in the interval 213–279 (LINVVNLPND…TRTIEALVED (67 aa)). One can recognise an HD domain in the interval 339-432 (ALGHSLEVAN…VCAADALSAA (94 aa)).

The protein belongs to the RNase Y family.

The protein resides in the cell membrane. In terms of biological role, endoribonuclease that initiates mRNA decay. The chain is Ribonuclease Y from Wolinella succinogenes (strain ATCC 29543 / DSM 1740 / CCUG 13145 / JCM 31913 / LMG 7466 / NCTC 11488 / FDC 602W) (Vibrio succinogenes).